Reading from the N-terminus, the 317-residue chain is Carbonic anhydrase 5B, mitochondrial (317 aa).

The N-terminal 33 residues, 1-33, are a transit peptide targeting the mitochondrion; it reads MVVMNSLRVILQASPGKLLWRKFQIPRFMPARP. Positions 37-296 constitute an Alpha-carbonic anhydrase domain; that stretch reads YTCTYKTRNR…LMNRTVRSSF (260 aa). Positions 130, 132, and 155 each coordinate Zn(2+). 235–236 is a substrate binding site; that stretch reads TT.

It belongs to the alpha-carbonic anhydrase family. Zn(2+) serves as cofactor. In terms of tissue distribution, strongest expression in heart, pancreas, kidney, placenta, lung, and skeletal muscle. Not expressed in liver.

It localises to the mitochondrion. It catalyses the reaction hydrogencarbonate + H(+) = CO2 + H2O. Its activity is regulated as follows. Inhibited by coumarins, sulfonamide derivatives such as acetazolamide (AZA), saccharin and Foscarnet (phosphonoformate trisodium salt). Functionally, mitochondrial carbonic anhydrase that catalyzes the reversible conversion of carbon dioxide to bicarbonate/HCO3. The polypeptide is Carbonic anhydrase 5B, mitochondrial (CA5B) (Homo sapiens (Human)).